A 660-amino-acid polypeptide reads, in one-letter code: uncharacterized protein (660 aa).

A disordered region spans residues 220 to 239 (ADARGQAAAPPQAQAPAPPD). The span at 222–239 (ARGQAAAPPQAQAPAPPD) shows a compositional bias: low complexity.

This is an uncharacterized protein from Callospermophilus lateralis (Golden-mantled ground squirrel).